We begin with the raw amino-acid sequence, 333 residues long: Glyoxylate reductase (333 aa).

Residues 158–161, 180–182, and 239–241 each bind NADP(+); these read FGRI, SRS, and IAR. Active-site residues include Arg241 and Glu270. His288 (proton donor) is an active-site residue. Position 288–290 (288–290) interacts with NADP(+); the sequence is HIG.

It belongs to the D-isomer specific 2-hydroxyacid dehydrogenase family. GyaR subfamily. In terms of assembly, homodimer.

The protein localises to the cytoplasm. It carries out the reaction glycolate + NAD(+) = glyoxylate + NADH + H(+). This chain is Glyoxylate reductase, found in Thermococcus kodakarensis (strain ATCC BAA-918 / JCM 12380 / KOD1) (Pyrococcus kodakaraensis (strain KOD1)).